The primary structure comprises 138 residues: MPEKLQVLGSRKGLTPGLQHYTTVTVADNSGAKEAVIIGIYGYKGVLRRIPFANIADLVMVSVRKGTPEVRKQKFKAVIVRQRMPFRRPDGTWIAFEDNAVVIVNPDGTPKGTEIRGPIAKEAAERWPKVASIATMVI.

Belongs to the universal ribosomal protein uL14 family. Part of the 50S ribosomal subunit. Forms a cluster with proteins L3 and L24e, part of which may contact the 16S rRNA in 2 intersubunit bridges.

Its function is as follows. Binds to 23S rRNA. Forms part of two intersubunit bridges in the 70S ribosome. This chain is Large ribosomal subunit protein uL14, found in Sulfurisphaera tokodaii (strain DSM 16993 / JCM 10545 / NBRC 100140 / 7) (Sulfolobus tokodaii).